Consider the following 458-residue polypeptide: ATP synthase subunit beta (458 aa).

148 to 155 provides a ligand contact to ATP; the sequence is GGAGVGKT.

The protein belongs to the ATPase alpha/beta chains family. F-type ATPases have 2 components, CF(1) - the catalytic core - and CF(0) - the membrane proton channel. CF(1) has five subunits: alpha(3), beta(3), gamma(1), delta(1), epsilon(1). CF(0) has three main subunits: a(1), b(2) and c(9-12). The alpha and beta chains form an alternating ring which encloses part of the gamma chain. CF(1) is attached to CF(0) by a central stalk formed by the gamma and epsilon chains, while a peripheral stalk is formed by the delta and b chains.

It localises to the cell inner membrane. It carries out the reaction ATP + H2O + 4 H(+)(in) = ADP + phosphate + 5 H(+)(out). Produces ATP from ADP in the presence of a proton gradient across the membrane. The catalytic sites are hosted primarily by the beta subunits. The chain is ATP synthase subunit beta from Shewanella halifaxensis (strain HAW-EB4).